A 127-amino-acid polypeptide reads, in one-letter code: MLYSVLAISLGASAGAVSRWLLGLGFNTLFPTIPPGTLLANLLGGYLIGIAVTFFAANPNLPPEWRLLVITGFLGGLTTFSTFSAEVTTLLQQGRLLWAGGAIAVHVIGSLVMTLLGMATMSLLQRS.

4 helical membrane passes run 6-26 (LAISLGASAGAVSRWLLGLGF), 37-57 (TLLANLLGGYLIGIAVTFFAA), 67-87 (LLVITGFLGGLTTFSTFSAEV), and 96-116 (LLWAGGAIAVHVIGSLVMTLL). Positions 75 and 78 each coordinate Na(+).

Belongs to the fluoride channel Fluc/FEX (TC 1.A.43) family.

Its subcellular location is the cell inner membrane. It catalyses the reaction fluoride(in) = fluoride(out). Na(+) is not transported, but it plays an essential structural role and its presence is essential for fluoride channel function. In terms of biological role, fluoride-specific ion channel. Important for reducing fluoride concentration in the cell, thus reducing its toxicity. The protein is Fluoride-specific ion channel FluC of Tolumonas auensis (strain DSM 9187 / NBRC 110442 / TA 4).